The chain runs to 249 residues: Probable transcriptional regulatory protein aq_1575 (249 aa).

The protein belongs to the TACO1 family.

It localises to the cytoplasm. In Aquifex aeolicus (strain VF5), this protein is Probable transcriptional regulatory protein aq_1575.